Here is an 84-residue protein sequence, read N- to C-terminus: Putative membrane protein insertion efficiency factor (84 aa).

This sequence belongs to the UPF0161 family.

Its subcellular location is the cell inner membrane. Could be involved in insertion of integral membrane proteins into the membrane. The protein is Putative membrane protein insertion efficiency factor of Shewanella loihica (strain ATCC BAA-1088 / PV-4).